A 344-amino-acid chain; its full sequence is Aurora kinase B (344 aa).

Positions 1-22 (MAQKENSYPWPYGRQTAPSGLS) are disordered. A Phosphothreonine modification is found at Thr35. At Ser62 the chain carries Phosphoserine. The residue at position 64 (Thr64) is a Phosphothreonine. The region spanning 77 to 327 (FEIGRPLGKG…LAQVSAHPWV (251 aa)) is the Protein kinase domain. ATP contacts are provided by residues 83 to 91 (LGKGKFGNV) and Lys106. Asp200 (proton acceptor) is an active-site residue. Position 215 is an N6-acetyllysine (Lys215). Residue Ser227 is modified to Phosphoserine. A Phosphothreonine; by autocatalysis modification is found at Thr232.

This sequence belongs to the protein kinase superfamily. Ser/Thr protein kinase family. Aurora subfamily. As to quaternary structure, component of the chromosomal passenger complex (CPC) composed of at least BIRC5/survivin, CDCA8/borealin, INCENP, AURKB or AURKC; predominantly independent AURKB- and AURKC-containing complexes exist. Associates with RACGAP1 during M phase. Interacts with SPDYC; this interaction may be required for proper localization of active, Thr-232-phosphorylated AURKB form during prometaphase and metaphase. Interacts with p53/TP53. Interacts (via the middle kinase domain) with NOC2L (via the N- and C-terminus domains). Interacts with CDCA1. Interacts with EVI5. Interacts with JTB. Interacts with NDC80. Interacts with PSMA3. Interacts with RNF2/RING1B. Interacts with SEPTIN1. Interacts with SIRT2. Interacts with TACC1. Interacts with TTC28. The phosphorylation of Thr-232 requires the binding to INCENP and occurs by means of an autophosphorylation mechanism. Thr-232 phosphorylation is indispensable for the AURKB kinase activity. Post-translationally, acetylated at Lys-215 by KAT5 at kinetochores, increasing AURKB activity and promoting accurate chromosome segregation in mitosis. In terms of processing, ubiquitinated by different BCR (BTB-CUL3-RBX1) E3 ubiquitin ligase complexes. Ubiquitinated by the BCR(KLHL9-KLHL13) E3 ubiquitin ligase complex, ubiquitination leads to removal from mitotic chromosomes and is required for cytokinesis. During anaphase, the BCR(KLHL21) E3 ubiquitin ligase complex recruits the CPC complex from chromosomes to the spindle midzone and mediates the ubiquitination of AURKB. Ubiquitination of AURKB by BCR(KLHL21) E3 ubiquitin ligase complex may not lead to its degradation by the proteasome. Deubiquitinated by USP35; inhibiting CDH1-mediated degradation of AURKB. As to expression, high level expression seen in the thymus. It is also expressed in the spleen, lung, testis, colon, placenta and fetal liver. Expressed during S and G2/M phase and expression is up-regulated in cancer cells during M phase. Not expressed in normal liver, high expression in metastatic liver.

The protein localises to the nucleus. It localises to the chromosome. It is found in the centromere. The protein resides in the kinetochore. Its subcellular location is the cytoplasm. The protein localises to the cytoskeleton. It localises to the spindle. It is found in the midbody. The enzyme catalyses L-seryl-[protein] + ATP = O-phospho-L-seryl-[protein] + ADP + H(+). It carries out the reaction L-threonyl-[protein] + ATP = O-phospho-L-threonyl-[protein] + ADP + H(+). Activity is greatly increased when AURKB is within the CPC complex. In particular, AURKB-phosphorylated INCENP acts as an activator of AURKB. Positive feedback between HASPIN and AURKB contributes to CPC localization. Inhibited by ZM447439. Its function is as follows. Serine/threonine-protein kinase component of the chromosomal passenger complex (CPC), a complex that acts as a key regulator of mitosis. The CPC complex has essential functions at the centromere in ensuring correct chromosome alignment and segregation and is required for chromatin-induced microtubule stabilization and spindle assembly. Involved in the bipolar attachment of spindle microtubules to kinetochores and is a key regulator for the onset of cytokinesis during mitosis. Required for central/midzone spindle assembly and cleavage furrow formation. Key component of the cytokinesis checkpoint, a process required to delay abscission to prevent both premature resolution of intercellular chromosome bridges and accumulation of DNA damage: phosphorylates CHMP4C, leading to retain abscission-competent VPS4 (VPS4A and/or VPS4B) at the midbody ring until abscission checkpoint signaling is terminated at late cytokinesis. AURKB phosphorylates the CPC complex subunits BIRC5/survivin, CDCA8/borealin and INCENP. Phosphorylation of INCENP leads to increased AURKB activity. Other known AURKB substrates involved in centromeric functions and mitosis are CENPA, DES/desmin, GPAF, KIF2C, NSUN2, RACGAP1, SEPTIN1, VIM/vimentin, HASPIN, and histone H3. A positive feedback loop involving HASPIN and AURKB contributes to localization of CPC to centromeres. Phosphorylation of VIM controls vimentin filament segregation in cytokinetic process, whereas histone H3 is phosphorylated at 'Ser-10' and 'Ser-28' during mitosis (H3S10ph and H3S28ph, respectively). AURKB is also required for kinetochore localization of BUB1 and SGO1. Phosphorylation of p53/TP53 negatively regulates its transcriptional activity. Key regulator of active promoters in resting B- and T-lymphocytes: acts by mediating phosphorylation of H3S28ph at active promoters in resting B-cells, inhibiting RNF2/RING1B-mediated ubiquitination of histone H2A and enhancing binding and activity of the USP16 deubiquitinase at transcribed genes. Acts as an inhibitor of CGAS during mitosis: catalyzes phosphorylation of the N-terminus of CGAS during the G2-M transition, blocking CGAS liquid phase separation and activation, and thereby preventing CGAS-induced autoimmunity. Phosphorylates KRT5 during anaphase and telophase. Phosphorylates ATXN10 which promotes phosphorylation of ATXN10 by PLK1 and may play a role in the regulation of cytokinesis and stimulating the proteasomal degradation of ATXN10. The chain is Aurora kinase B (AURKB) from Homo sapiens (Human).